Consider the following 22-residue polypeptide: Leptoglycin (22 aa).

Positions 1-22 (GLLGGLLGPLLGGGGGGGGGLL) are disordered.

As to expression, expressed by the skin glands.

Its subcellular location is the secreted. Its function is as follows. Antimicrobial protein. Has antibacterial activity against the Gram-negative bacteria E.coli ATCC 28922 (MIC=50 uM), P.aeruginosa ATCC 9027 (MIC=8 uM) and C.freundii ATCC 8090 (MIC=75 uM). Does not have hemolytic activity. This is Leptoglycin from Leptodactylus pentadactylus (Smokey jungle frog).